We begin with the raw amino-acid sequence, 306 residues long: Agmatinase (306 aa).

Positions 126, 149, 151, 153, 230, and 232 each coordinate Mn(2+).

It belongs to the arginase family. Agmatinase subfamily. It depends on Mn(2+) as a cofactor.

It carries out the reaction agmatine + H2O = urea + putrescine. Its pathway is amine and polyamine biosynthesis; putrescine biosynthesis via agmatine pathway; putrescine from agmatine: step 1/1. Its function is as follows. Catalyzes the formation of putrescine from agmatine. The chain is Agmatinase from Shigella dysenteriae serotype 1 (strain Sd197).